A 409-amino-acid polypeptide reads, in one-letter code: Aspartate aminotransferase, cytoplasmic (409 aa).

S2 is subject to N-acetylserine. Residues G38, W138, and N191 each coordinate L-aspartate. K255 bears the N6-(pyridoxal phosphate)lysine mark. R383 contributes to the L-aspartate binding site. Residue S385 is modified to Phosphoserine.

Belongs to the class-I pyridoxal-phosphate-dependent aminotransferase family. In terms of assembly, homodimer. Pyridoxal 5'-phosphate serves as cofactor.

The protein localises to the cytoplasm. The enzyme catalyses L-aspartate + 2-oxoglutarate = oxaloacetate + L-glutamate. Plays a key role in amino acid metabolism. This chain is Aspartate aminotransferase, cytoplasmic, found in Schizosaccharomyces pombe (strain 972 / ATCC 24843) (Fission yeast).